The chain runs to 490 residues: Solute carrier family 2, facilitated glucose transporter member 1 (490 aa).

The Cytoplasmic segment spans residues 1 to 10 (MESGSKMTAR). A helical membrane pass occupies residues 11-32 (LMLAVGGAVLGSLQFGYNTGVI). At 33-65 (NRPQKVIEDFYNHTWLYRYEEPISPATLTTLWS) the chain is on the extracellular side. A glycan (N-linked (GlcNAc...) asparagine) is linked at Asn44. The helical transmembrane segment at 66-86 (LSVAIFSVGGMIGSFSVGLFV) threads the bilayer. The Cytoplasmic segment spans residues 87-89 (NRF). The helical transmembrane segment at 90-111 (GRRNSMLMSNILAFLAAVLMGF) threads the bilayer. The Extracellular segment spans residues 112–119 (SKMALSFE). Residues 120–143 (MLILGRFIIGLYSGLTTGFVPMYV) traverse the membrane as a helical segment. Residues 144–154 (GEVSPTALRGA) lie on the Cytoplasmic side of the membrane. The helical transmembrane segment at 155–175 (LGTFHQLGIVLGILIAQVFGL) threads the bilayer. A D-glucose-binding site is contributed by Gln160. The Extracellular portion of the chain corresponds to 176–184 (DLIMGNDSL). The chain crosses the membrane as a helical span at residues 185–205 (WPLLLGFIFVPALLQCIILPF). The Cytoplasmic portion of the chain corresponds to 206 to 270 (APESPRFLLI…LFRSPMYRQP (65 aa)). The chain crosses the membrane as a helical span at residues 271–292 (ILIAIVLQLSQQLSGINAVFYY). D-glucose is bound by residues 281 to 282 (QQ) and Asn287. Topologically, residues 293 to 305 (STSIFEKSGVEQP) are extracellular. Residues 306–327 (VYATIGSGVVNTAFTVVSLFVV) traverse the membrane as a helical segment. Asn316 provides a ligand contact to D-glucose. Residues 328-333 (ERAGRR) lie on the Cytoplasmic side of the membrane. A helical transmembrane segment spans residues 334–354 (TLHLIGLAGMAGCAILMTIAL). Over 355-364 (TLLDQMPWMS) the chain is Extracellular. A helical transmembrane segment spans residues 365-387 (YLSIVAIFGFVAFFEIGPGPIPW). Glu379 and Trp387 together coordinate D-glucose. Residues 388–400 (FIVAELFSQGPRP) are Cytoplasmic-facing. A helical membrane pass occupies residues 401-421 (AAFAVAGLSNWTSNFIVGMGF). Residues 422–428 (QYIAQLC) are Extracellular-facing. A helical membrane pass occupies residues 429-449 (GSYVFIIFTVLLVLFFIFTYF). Topologically, residues 450–490 (KVPETKGRTFDEIAYRFRQGGASQSDKTPDEFHSLGADSQV) are cytoplasmic. A disordered region spans residues 470-490 (GASQSDKTPDEFHSLGADSQV).

The protein belongs to the major facilitator superfamily. Sugar transporter (TC 2.A.1.1) family. Glucose transporter subfamily. Interacts with isoform 1 of BSG. As to expression, retinal cones (at protein level).

It is found in the cell membrane. Its subcellular location is the photoreceptor inner segment. It catalyses the reaction D-glucose(out) = D-glucose(in). Functionally, facilitative glucose transporter, which is responsible for constitutive or basal glucose uptake. Has a very broad substrate specificity; can transport a wide range of aldoses including both pentoses and hexoses. Most important energy carrier of the brain: present at the blood-brain barrier and assures the energy-independent, facilitative transport of glucose into the brain. In association with BSG and NXNL1, promotes retinal cone survival by increasing glucose uptake into photoreceptors. Required for mesendoderm differentiation. This is Solute carrier family 2, facilitated glucose transporter member 1 from Gallus gallus (Chicken).